The sequence spans 243 residues: HTH-type transcriptional regulator MlrA (243 aa).

In terms of domain architecture, HTH merR-type spans 3–72 (LYTIGEVALL…VSKVKVLLSS (70 aa)). The H-T-H motif DNA-binding region spans 6–25 (IGEVALLCDINPVTLRAWQR).

Functionally, transcriptional activator of csgD, which is required for production of the curli (AgF). The chain is HTH-type transcriptional regulator MlrA from Salmonella typhimurium (strain SL1344).